Reading from the N-terminus, the 369-residue chain is Anhydro-N-acetylmuramic acid kinase (369 aa).

Position 12-19 (12-19 (GTSLDGVD)) interacts with ATP.

The protein belongs to the anhydro-N-acetylmuramic acid kinase family.

It carries out the reaction 1,6-anhydro-N-acetyl-beta-muramate + ATP + H2O = N-acetyl-D-muramate 6-phosphate + ADP + H(+). The protein operates within amino-sugar metabolism; 1,6-anhydro-N-acetylmuramate degradation. It functions in the pathway cell wall biogenesis; peptidoglycan recycling. In terms of biological role, catalyzes the specific phosphorylation of 1,6-anhydro-N-acetylmuramic acid (anhMurNAc) with the simultaneous cleavage of the 1,6-anhydro ring, generating MurNAc-6-P. Is required for the utilization of anhMurNAc either imported from the medium or derived from its own cell wall murein, and thus plays a role in cell wall recycling. The sequence is that of Anhydro-N-acetylmuramic acid kinase from Actinobacillus pleuropneumoniae serotype 5b (strain L20).